Consider the following 261-residue polypeptide: Na(+)-translocating NADH-quinone reductase subunit C (261 aa).

A helical transmembrane segment spans residues 12–32 (LGVVVGLSLVCSIIVSTAAVG). Thr-229 carries the FMN phosphoryl threonine modification.

In terms of assembly, composed of six subunits; NqrA, NqrB, NqrC, NqrD, NqrE and NqrF. FMN serves as cofactor.

It localises to the cell inner membrane. It carries out the reaction a ubiquinone + n Na(+)(in) + NADH + H(+) = a ubiquinol + n Na(+)(out) + NAD(+). NQR complex catalyzes the reduction of ubiquinone-1 to ubiquinol by two successive reactions, coupled with the transport of Na(+) ions from the cytoplasm to the periplasm. NqrA to NqrE are probably involved in the second step, the conversion of ubisemiquinone to ubiquinol. The sequence is that of Na(+)-translocating NADH-quinone reductase subunit C from Vibrio campbellii (strain ATCC BAA-1116).